The primary structure comprises 124 residues: Large ribosomal subunit protein bL12 (124 aa).

It belongs to the bacterial ribosomal protein bL12 family. In terms of assembly, homodimer. Part of the ribosomal stalk of the 50S ribosomal subunit. Forms a multimeric L10(L12)X complex, where L10 forms an elongated spine to which 2 to 4 L12 dimers bind in a sequential fashion. Binds GTP-bound translation factors.

Functionally, forms part of the ribosomal stalk which helps the ribosome interact with GTP-bound translation factors. Is thus essential for accurate translation. In Burkholderia thailandensis (strain ATCC 700388 / DSM 13276 / CCUG 48851 / CIP 106301 / E264), this protein is Large ribosomal subunit protein bL12.